The chain runs to 359 residues: 3-dehydroquinate synthase (359 aa).

NAD(+) is bound by residues 71 to 76 (DGEQYK), 104 to 108 (GVVGD), 128 to 129 (TT), Lys-141, Lys-150, and 168 to 171 (TLNT). Zn(2+)-binding residues include Glu-183, His-247, and His-264.

It belongs to the sugar phosphate cyclases superfamily. Dehydroquinate synthase family. It depends on Co(2+) as a cofactor. Requires Zn(2+) as cofactor. The cofactor is NAD(+).

The protein resides in the cytoplasm. It catalyses the reaction 7-phospho-2-dehydro-3-deoxy-D-arabino-heptonate = 3-dehydroquinate + phosphate. Its pathway is metabolic intermediate biosynthesis; chorismate biosynthesis; chorismate from D-erythrose 4-phosphate and phosphoenolpyruvate: step 2/7. Functionally, catalyzes the conversion of 3-deoxy-D-arabino-heptulosonate 7-phosphate (DAHP) to dehydroquinate (DHQ). The polypeptide is 3-dehydroquinate synthase (Coxiella burnetii (strain Dugway 5J108-111)).